A 361-amino-acid chain; its full sequence is Peptide chain release factor 1 (361 aa).

At Gln236 the chain carries N5-methylglutamine.

The protein belongs to the prokaryotic/mitochondrial release factor family. Methylated by PrmC. Methylation increases the termination efficiency of RF1.

Its subcellular location is the cytoplasm. Peptide chain release factor 1 directs the termination of translation in response to the peptide chain termination codons UAG and UAA. This Levilactobacillus brevis (strain ATCC 367 / BCRC 12310 / CIP 105137 / JCM 1170 / LMG 11437 / NCIMB 947 / NCTC 947) (Lactobacillus brevis) protein is Peptide chain release factor 1.